Reading from the N-terminus, the 435-residue chain is MSSPGAESAGKSLQYRVDHLLSAVESELQAGSEKGDPTERELRVGLEDSELWLRFKELTNEMIVTKNGRRMFPVLKVNVSGLDPNAMYSFLLDFVAADNHRWKYVNGEWVPGGKPEPQAPSCVYIHPDSPNFGAHWMKAPVSFSKVKLTNKLNGGGQIMLNSLHKYEPRIHIVRVGGAQRMITSHCFPETQFIAVTAYQNEEITALKIKYNPFAKAFLDAKERSDHKDMMEEPGDSQQSGYSQWGWLIPGTSTLCPPATPHPQFGGPLSLPSTHGCERYPALRNHRPSPYPSPYAHRNNSPTYSDNPSACLSMLQSHDSWPSLGTPAHTSMLPMSHSAGPPTGSSQYPSLWSVSNGTITPGAQPAGMSNGLGAQFFRGSSAHGAPLGHAVPAPSASGSPLYEGAPTATDVPDSQYDASAQARLIASWTPVSPPSM.

The T-box DNA-binding region spans 51-219; that stretch reads LWLRFKELTN…YNPFAKAFLD (169 aa). Disordered regions lie at residues 280 to 310 and 384 to 412; these read PALR…PSAC and APLG…DVPD. The span at 297–310 shows a compositional bias: polar residues; it reads RNNSPTYSDNPSAC.

Monomer. Binds DNA as a monomer.

It is found in the nucleus. In terms of biological role, involved in the transcriptional regulation of genes required for mesoderm formation and differentiation. Binds to a palindromic site (called T site) and activates gene transcription when bound to such a site. The protein is T-box transcription factor T of Canis lupus familiaris (Dog).